The sequence spans 115 residues: Ribonuclease P protein component (115 aa).

This sequence belongs to the RnpA family. Consists of a catalytic RNA component (M1 or rnpB) and a protein subunit.

It catalyses the reaction Endonucleolytic cleavage of RNA, removing 5'-extranucleotides from tRNA precursor.. In terms of biological role, RNaseP catalyzes the removal of the 5'-leader sequence from pre-tRNA to produce the mature 5'-terminus. It can also cleave other RNA substrates such as 4.5S RNA. The protein component plays an auxiliary but essential role in vivo by binding to the 5'-leader sequence and broadening the substrate specificity of the ribozyme. The chain is Ribonuclease P protein component from Staphylococcus epidermidis (strain ATCC 35984 / DSM 28319 / BCRC 17069 / CCUG 31568 / BM 3577 / RP62A).